A 66-amino-acid chain; its full sequence is Large ribosomal subunit protein bL35 (66 aa).

It belongs to the bacterial ribosomal protein bL35 family.

The sequence is that of Large ribosomal subunit protein bL35 from Synechococcus sp. (strain JA-2-3B'a(2-13)) (Cyanobacteria bacterium Yellowstone B-Prime).